The following is a 206-amino-acid chain: Na(+)-translocating NADH-quinone reductase subunit E (206 aa).

6 consecutive transmembrane segments (helical) span residues 12-32 (AVFV…FIAI), 36-56 (IQTA…TVPV), 85-105 (FLGL…LEMT), 118-138 (GIFL…LFMV), 148-168 (VVYG…LAGI), and 184-204 (LGIT…FSGV).

The protein belongs to the NqrDE/RnfAE family. Composed of six subunits; NqrA, NqrB, NqrC, NqrD, NqrE and NqrF.

It is found in the cell inner membrane. It carries out the reaction a ubiquinone + n Na(+)(in) + NADH + H(+) = a ubiquinol + n Na(+)(out) + NAD(+). Functionally, NQR complex catalyzes the reduction of ubiquinone-1 to ubiquinol by two successive reactions, coupled with the transport of Na(+) ions from the cytoplasm to the periplasm. NqrA to NqrE are probably involved in the second step, the conversion of ubisemiquinone to ubiquinol. The polypeptide is Na(+)-translocating NADH-quinone reductase subunit E (Alcanivorax borkumensis (strain ATCC 700651 / DSM 11573 / NCIMB 13689 / SK2)).